Reading from the N-terminus, the 172-residue chain is Translationally-controlled tumor protein homolog (172 aa).

Positions 1-172 constitute a TCTP domain; sequence MIIYRDCISQ…FKDGLEMEKC (172 aa).

Belongs to the TCTP family. Expressed by the venom gland.

It is found in the secreted. Venom protein that causes edema, enhances vascular permeability and is likely related to the inflammatory activity of the venom. The protein is Translationally-controlled tumor protein homolog of Crotalus adamanteus (Eastern diamondback rattlesnake).